Reading from the N-terminus, the 491-residue chain is Glutamyl-tRNA(Gln) amidotransferase subunit A (491 aa).

Catalysis depends on charge relay system residues K80 and S155. S179 (acyl-ester intermediate) is an active-site residue.

The protein belongs to the amidase family. GatA subfamily. In terms of assembly, heterotrimer of A, B and C subunits.

The enzyme catalyses L-glutamyl-tRNA(Gln) + L-glutamine + ATP + H2O = L-glutaminyl-tRNA(Gln) + L-glutamate + ADP + phosphate + H(+). Allows the formation of correctly charged Gln-tRNA(Gln) through the transamidation of misacylated Glu-tRNA(Gln) in organisms which lack glutaminyl-tRNA synthetase. The reaction takes place in the presence of glutamine and ATP through an activated gamma-phospho-Glu-tRNA(Gln). This Salinispora arenicola (strain CNS-205) protein is Glutamyl-tRNA(Gln) amidotransferase subunit A.